The following is a 524-amino-acid chain: Phosphoenolpyruvate carboxykinase (ATP) (524 aa).

Substrate contacts are provided by Arg-52, Tyr-188, and Lys-194. Residues Lys-194, His-213, and 229-237 (GLSGTGKTT) each bind ATP. Residues Lys-194 and His-213 each coordinate Mn(2+). Asp-250 provides a ligand contact to Mn(2+). ATP-binding residues include Glu-278, Arg-314, and Thr-439. Arg-314 serves as a coordination point for substrate.

The protein belongs to the phosphoenolpyruvate carboxykinase (ATP) family. The cofactor is Mn(2+).

It is found in the cytoplasm. It catalyses the reaction oxaloacetate + ATP = phosphoenolpyruvate + ADP + CO2. The protein operates within carbohydrate biosynthesis; gluconeogenesis. Its function is as follows. Involved in the gluconeogenesis. Catalyzes the conversion of oxaloacetate (OAA) to phosphoenolpyruvate (PEP) through direct phosphoryl transfer between the nucleoside triphosphate and OAA. This Campylobacter lari (strain RM2100 / D67 / ATCC BAA-1060) protein is Phosphoenolpyruvate carboxykinase (ATP).